The chain runs to 266 residues: CD82 antigen (266 aa).

At 1–11 (MGAGCVKVTKY) the chain is on the cytoplasmic side. Cys-5 is lipidated: S-palmitoyl cysteine. The chain crosses the membrane as a helical span at residues 12-32 (FLFLFNLLFFILGAVILGFGV). Topologically, residues 33-53 (WILADKNSFISVLQTSSSSLQ) are extracellular. Residues 54-72 (VGAYVFIGVGAITIVMGFL) traverse the membrane as a helical segment. Residues 73–83 (GCIGAVNEVRC) are Cytoplasmic-facing. A lipid anchor (S-palmitoyl cysteine) is attached at Cys-74. A helical membrane pass occupies residues 84 to 110 (LLGLYFVFLLLILIAQVTVGVLFYFNA). Residues 111–227 (DKLKKEMGNT…KAQAWLQENF (117 aa)) are Extracellular-facing. Asn-127, Asn-131, Asn-157, and Asn-197 each carry an N-linked (GlcNAc...) asparagine glycan. A helical transmembrane segment spans residues 228 to 249 (GILLGVCAGVAVIELLGLFLSI). Residues 250-266 (CLCRYIHSEDYSKVPKY) lie on the Cytoplasmic side of the membrane.

This sequence belongs to the tetraspanin (TM4SF) family. In terms of assembly, forms homooligomers. Interacts directly with IGSF8. Interacts with EGFR. Interacts with VEGFA and PDGFA. Interacts with ITGA4. Interacts with ITGA6; this interaction reduces ITGA6 cell surface expression. Interacts with ITGB1. Interacts with TLR4; this interaction inhibits TLR4-mediated signaling pathway. Interacts with TLR9. Interacts with PLAUR. Palmitoylated. Palmitoylation contributes to oligomerization and surface expression. As to expression, highest expression in the spleen and the kidney. Low expression in skeletal muscle and in the heart.

It localises to the cell membrane. It is found in the cytoplasmic vesicle. Its subcellular location is the phagosome. Functionally, structural component of specialized membrane microdomains known as tetraspanin-enriched microdomains (TERMs), which act as platforms for receptor clustering and signaling. Participates thereby in diverse biological functions such as cell signal transduction, adhesion, migration and protein trafficking. Acts as a attenuator of EGF signaling, facilitating ligand-induced endocytosis of the receptor and its subsequent desensitization. Mechanistically, modulates ligand-induced ubiquitination and trafficking of EGFR via E3 ligase CBL phosphorylation by PKC. Increases cell-matrix adhesion by regulating the membrane organization of integrin alpha4/ITA4. Modulates adhesion and suppresses cell migration through other integrins such as the alpha6/ITGA6 and beta1/ITGB1. Decreases cell-associated plasminogen activation by interfering with the interaction between urokinase-type plasminogen activator/PLAU and its receptor PLAUR. Associates with CD4 or CD8 and delivers costimulatory signals for the TCR/CD3 pathway. Plays a role in the restrains phagocyte migration but supports macrophage activation. Plays a role in TLR9 trafficking to acidified CpG-containing compartments by controlling interaction between TLR9 and VAMP3 and subsequent myddosome assembly. Inhibits LPS-induced inflammatory response by preventing binding of LPS to TLR4 on the cell surface. Plays a role in the activation of macrophages into anti-inflammatory phenotypes. Independently of Toll-like receptor (TLR) signaling, is recruited to pathogen-containing phagosomes prior to fusion with lysosomes and participates in antigen presentation. Also acts to control angiogenesis and switch angiogenic milieu to quiescent state by binding and sequestering VEGFA and PDGFA to inhibit the signaling they trigger via their respective cell surface receptor. In Mus musculus (Mouse), this protein is CD82 antigen (Cd82).